A 551-amino-acid chain; its full sequence is Probable metalloreductase AIM14 (551 aa).

A run of 7 helical transmembrane segments spans residues 25 to 45 (GIII…VKFI), 67 to 87 (PTWM…GANI), 100 to 117 (RYGR…YLIL), 138 to 155 (KWLS…AIGY), 172 to 192 (FLNF…IVSI), 199 to 221 (YYSL…IIFH), and 225 to 247 (GVTI…LRFY). Residues 102–217 (GRIAYCLLPL…NITAWSMVVL (116 aa)) form the Ferric oxidoreductase domain. The FAD-binding FR-type domain maps to 247–369 (YKSYPVNNLK…GGSGISFGLP (123 aa)). The segment at 440–492 (QDESHAKVEQTQGEEEVDGLLNQDENGIPLQSMKKESFPKKEEGEDEEKSSKD) is disordered. Over residues 472 to 492 (MKKESFPKKEEGEDEEKSSKD) the composition is skewed to basic and acidic residues.

This sequence belongs to the ferric reductase (FRE) family. AIM14 subfamily.

The protein resides in the membrane. In terms of biological role, probable cell surface metalloreductase. May be involved in iron or copper homeostasis. The protein is Probable metalloreductase AIM14 (AIM14) of Candida tropicalis (strain ATCC MYA-3404 / T1) (Yeast).